A 74-amino-acid chain; its full sequence is ATP synthase subunit c (74 aa).

A run of 2 helical transmembrane segments spans residues 9–29 and 54–74; these read IGAG…GNIF and FALT…ILFV.

This sequence belongs to the ATPase C chain family. In terms of assembly, F-type ATPases have 2 components, F(1) - the catalytic core - and F(0) - the membrane proton channel. F(1) has five subunits: alpha(3), beta(3), gamma(1), delta(1), epsilon(1). F(0) has three main subunits: a(1), b(2) and c(10-14). The alpha and beta chains form an alternating ring which encloses part of the gamma chain. F(1) is attached to F(0) by a central stalk formed by the gamma and epsilon chains, while a peripheral stalk is formed by the delta and b chains.

Its subcellular location is the cell inner membrane. Its function is as follows. F(1)F(0) ATP synthase produces ATP from ADP in the presence of a proton or sodium gradient. F-type ATPases consist of two structural domains, F(1) containing the extramembraneous catalytic core and F(0) containing the membrane proton channel, linked together by a central stalk and a peripheral stalk. During catalysis, ATP synthesis in the catalytic domain of F(1) is coupled via a rotary mechanism of the central stalk subunits to proton translocation. In terms of biological role, key component of the F(0) channel; it plays a direct role in translocation across the membrane. A homomeric c-ring of between 10-14 subunits forms the central stalk rotor element with the F(1) delta and epsilon subunits. In Gluconacetobacter diazotrophicus (strain ATCC 49037 / DSM 5601 / CCUG 37298 / CIP 103539 / LMG 7603 / PAl5), this protein is ATP synthase subunit c.